Reading from the N-terminus, the 430-residue chain is Adenylosuccinate synthetase (430 aa).

Residues 12 to 18 and 40 to 42 contribute to the GTP site; these read GDEGKGK and GHT. The Proton acceptor role is filled by D13. Positions 13 and 40 each coordinate Mg(2+). IMP is bound by residues 13 to 16, 38 to 41, T128, R142, Q223, T238, and R302; these read DEGK and NAGH. H41 serves as the catalytic Proton donor. 298–304 is a substrate binding site; it reads TTTGRPR. GTP is bound by residues R304, 330-332, and 412-414; these read SID and SVG.

Belongs to the adenylosuccinate synthetase family. In terms of assembly, homodimer. Requires Mg(2+) as cofactor.

It localises to the cytoplasm. The enzyme catalyses IMP + L-aspartate + GTP = N(6)-(1,2-dicarboxyethyl)-AMP + GDP + phosphate + 2 H(+). The protein operates within purine metabolism; AMP biosynthesis via de novo pathway; AMP from IMP: step 1/2. In terms of biological role, plays an important role in the de novo pathway of purine nucleotide biosynthesis. Catalyzes the first committed step in the biosynthesis of AMP from IMP. This is Adenylosuccinate synthetase from Streptococcus pyogenes serotype M49 (strain NZ131).